We begin with the raw amino-acid sequence, 315 residues long: Gamma-hemolysin component C (315 aa).

The first 29 residues, 1-29, serve as a signal peptide directing secretion; the sequence is MLKNKILATTLSVSLLAPLANPLLENAKA.

The protein belongs to the aerolysin family. As to quaternary structure, toxicity requires sequential binding and synergistic association of a class S and a class F component which form heterooligomeric complexes. HlgC (class S) associates with HlgB (class F) thus forming an CB toxin.

Toxin that seems to act by forming pores in the membrane of the cell. Has a hemolytic and a leucotoxic activity. This chain is Gamma-hemolysin component C (hlgC), found in Staphylococcus aureus (strain MRSA252).